A 433-amino-acid chain; its full sequence is MLMSVSILCLFFLINPYQIMIYLMIMTLFLLAKGLINNAESFINFFFFDLMSLSMVILTVWISILMIMASKSNNNYKNKIFNFYLLLMMNLLFICFMLENLLMFYLFFEAVLFPIILMISGWGSQPERIQAGFYMLMYTVFGSLPLLILMLLKNQSLSIIFNEWLFNEMGFIFFLMILGFLVKIPMFLFHLWLPKAHVEAPRAGSMILAGVLLKLGFYGLYRFKSFFFLDLLKFSFVLIVISMWGAVLISIFCLYQNDIKSLIAYSSVSHMGITLAGCVTFQLHTSFGMLMMMIGHGLCSSGLFCLKNMIYERLHTRSIMMIKGMINFPNLSMWWFLFSIINMSAPMTMNLFGELFLGLGLMKYSLLLSLPVMMMIFLSACYSMFMYSYINHGQSWMIFSNKMISMREYYLMLLHIIPMIMWFLKINFFMKWI.

The next 13 helical transmembrane spans lie at Leu10 to Leu30, Phe45 to Leu65, Ile80 to Asn100, Leu101 to Gly121, Gly132 to Leu152, Met169 to Phe189, Ala203 to Phe223, Phe234 to Leu254, Ser261 to Phe281, Ser286 to Leu306, Leu331 to Gly353, Leu366 to Met386, and Tyr410 to Met430.

This sequence belongs to the complex I subunit 4 family.

The protein localises to the mitochondrion membrane. It carries out the reaction a ubiquinone + NADH + 5 H(+)(in) = a ubiquinol + NAD(+) + 4 H(+)(out). Core subunit of the mitochondrial membrane respiratory chain NADH dehydrogenase (Complex I) that is believed to belong to the minimal assembly required for catalysis. Complex I functions in the transfer of electrons from NADH to the respiratory chain. The immediate electron acceptor for the enzyme is believed to be ubiquinone. The polypeptide is NADH-ubiquinone oxidoreductase chain 4 (ND4) (Rhipicephalus sanguineus (Brown dog tick)).